The chain runs to 150 residues: MQVILLEKVVNLGNLGEVVKVKDGYARNFLIPQRKARRATAAAVAEFEVKRAELEKIAAEKLAASQAQGEKLTGQTVQITQKSGVDGRLFGSVTNSDIAEALTKQGFAVEKAQVRLPTGPLKVAGDHVVAVALHTDVVVDVTITVIGDHA.

The protein belongs to the bacterial ribosomal protein bL9 family.

Functionally, binds to the 23S rRNA. This is Large ribosomal subunit protein bL9 from Janthinobacterium sp. (strain Marseille) (Minibacterium massiliensis).